The sequence spans 1048 residues: FERM, ARHGEF and pleckstrin domain-containing protein 1 (1048 aa).

The segment at 1–37 (MGEIEQKPTPASRLGAPENSGISTLERGQKPPPTPSG) is disordered. Phosphoserine occurs at positions 20 and 23. Residue Thr-24 is modified to Phosphothreonine. The FERM domain maps to 40–320 (MTVKIQMLDD…EHHAFFRLFE (281 aa)). A phosphoserine mark is found at Ser-340, Ser-373, Ser-389, Ser-403, Ser-427, Ser-433, and Ser-437. The interval 361–536 (FERKHSKIHS…TDDEEEGRRK (176 aa)) is disordered. Positions 371-395 (TRSLVSQPTAPNSEVPKQSPQSASL) are enriched in polar residues. Polar residues-rich tracts occupy residues 472–491 (STGSLTGSPHLSELSINSQG) and 498–513 (VTLSPNLSPDNKQASP). A phosphoserine mark is found at Ser-512 and Ser-516. Residues 542–733 (KAYYIAKEVS…TEMVAQLHGT (192 aa)) form the DH domain. A PH 1 domain is found at 762–859 (EFIRLGSLSK…WMEDIQMAID (98 aa)). Ser-836, Ser-875, and Ser-881 each carry phosphoserine. The segment at 865-907 (NGPTPELLASSPPDNKSPDEATAADQESEDDLSASRTSLERQA) is disordered. The residue at position 886 (Thr-886) is a Phosphothreonine. Phosphoserine occurs at positions 892, 899, and 902. Residues 935-1032 (ENQLSGNLLR…WMEVIRSATS (98 aa)) enclose the PH 2 domain.

Interacts with CADM1. Interacts with RAC1. Detected in brain cortex, hippocampus, striatum, olfactory bulb, cerebellum and hindbrain (at protein level).

The protein resides in the cell membrane. The protein localises to the synapse. Its subcellular location is the synaptosome. It localises to the cytoplasm. It is found in the cytosol. The protein resides in the cell projection. The protein localises to the filopodium. Its subcellular location is the dendrite. It localises to the dendritic spine. In terms of biological role, functions as a guanine nucleotide exchange factor for RAC1. May play a role in semaphorin signaling. Plays a role in the assembly and disassembly of dendritic filopodia, the formation of dendritic spines, regulation of dendrite length and ultimately the formation of synapses. The protein is FERM, ARHGEF and pleckstrin domain-containing protein 1 (Farp1) of Mus musculus (Mouse).